Consider the following 148-residue polypeptide: Putative anti-anti-sigma factor Rv2638 (148 aa).

The STAS domain maps to 30-141; sequence LRATTDGSGA…PTVDTALGKG (112 aa).

It belongs to the anti-sigma-factor antagonist family. In terms of assembly, interacts with unphosphorylated OprA.

This chain is Putative anti-anti-sigma factor Rv2638, found in Mycobacterium tuberculosis (strain ATCC 25618 / H37Rv).